The primary structure comprises 54 residues: Large ribosomal subunit protein bL32 (54 aa).

Positions 1–54 are disordered; the sequence is MAVQQNRKTRSRRGMRRSHDALTAAQLSVDSTSGETHRRHHVTADGYYRGKKVI. The segment covering 7 to 16 has biased composition (basic residues); sequence RKTRSRRGMR. The segment covering 25 to 34 has biased composition (polar residues); it reads AQLSVDSTSG.

Belongs to the bacterial ribosomal protein bL32 family.

The polypeptide is Large ribosomal subunit protein bL32 (Tolumonas auensis (strain DSM 9187 / NBRC 110442 / TA 4)).